A 63-amino-acid chain; its full sequence is Large ribosomal subunit protein uL29 (63 aa).

It belongs to the universal ribosomal protein uL29 family.

This is Large ribosomal subunit protein uL29 from Actinobacillus pleuropneumoniae serotype 5b (strain L20).